The chain runs to 213 residues: Orotate phosphoribosyltransferase (213 aa).

Residue lysine 26 coordinates 5-phospho-alpha-D-ribose 1-diphosphate. Phenylalanine 34 to phenylalanine 35 contributes to the orotate binding site. 5-phospho-alpha-D-ribose 1-diphosphate contacts are provided by residues tyrosine 72–lysine 73, arginine 99, lysine 100, lysine 103, histidine 105, and aspartate 124–alanine 132. Orotate contacts are provided by threonine 128 and arginine 156.

The protein belongs to the purine/pyrimidine phosphoribosyltransferase family. PyrE subfamily. Homodimer. It depends on Mg(2+) as a cofactor.

The catalysed reaction is orotidine 5'-phosphate + diphosphate = orotate + 5-phospho-alpha-D-ribose 1-diphosphate. Its pathway is pyrimidine metabolism; UMP biosynthesis via de novo pathway; UMP from orotate: step 1/2. Catalyzes the transfer of a ribosyl phosphate group from 5-phosphoribose 1-diphosphate to orotate, leading to the formation of orotidine monophosphate (OMP). This Salmonella agona (strain SL483) protein is Orotate phosphoribosyltransferase.